A 428-amino-acid chain; its full sequence is MKIELICTGSELLTGKVNTNAAYIGSRLSAIGFEISLVTDVGDKKQDLLREFKRAFKRSNIVITTGGLGPTFDDITVETAAECLNLKIYPDEKVLNSIKEYFLKRSVAASIPKINEKQANIIRGAKVLENRVGTAPGQMLHFKFKDSEKKYRKTLFLLPGPPEEMKPIFEENVEPFLKSYSVGIKKNGVLHVFGIAESAVEEMIKPVMEEAVSGDSKFVEFGILASKSVIDIKFSVSGTDELFVDETISKLKLGFGNVLKDNIFGFDNDTLASVAGRLLLENKKTVSFAESCTGGNIAAAITDIPGSSLYFKSSVVTYSNESKMKLLGVKEETLTNFGAVSKETVKEMAEGVLKLSDSDYAFSVTGIAGPIGGTKKKPVGLVYIGSADKKKTESFKFNFSGTRKDIRKRTVNTALDLLRRKLIAKHSY.

This sequence belongs to the CinA family.

This chain is CinA-like protein, found in Endomicrobium trichonymphae.